The primary structure comprises 312 residues: MKIFFVSSSSIALEVFKEIVKHYEVVGVLTLPDRPKGRGQKLSQNVIKSEAIARNIKVLDPLILDDNVLNLVRDLNPDLMLVFSYGKIFKKEFLDLFPKGCINVHPSLLPKYRGVSPIQSAILNGDCVSGVTIQSMALEMDSGNILVQKNFKIRSYDTSHDISKLVSSLSPSLVLEALEKISKGFLGIPQKSSEATFCSFLKKESGFIDFNLSAFEIKNKINACNPWPLVRVRLDYNDIIFHRADFLEVDLYKERKIGEIVDFNPEKGLFVNTGKGILLLLEVQRPGRKVLDFKSFYNGSRQLIGQVFSSIE.

Residue 107–110 (SLLP) participates in (6S)-5,6,7,8-tetrahydrofolate binding.

It belongs to the Fmt family.

The catalysed reaction is L-methionyl-tRNA(fMet) + (6R)-10-formyltetrahydrofolate = N-formyl-L-methionyl-tRNA(fMet) + (6S)-5,6,7,8-tetrahydrofolate + H(+). Attaches a formyl group to the free amino group of methionyl-tRNA(fMet). The formyl group appears to play a dual role in the initiator identity of N-formylmethionyl-tRNA by promoting its recognition by IF2 and preventing the misappropriation of this tRNA by the elongation apparatus. The chain is Methionyl-tRNA formyltransferase from Borreliella burgdorferi (strain ZS7) (Borrelia burgdorferi).